The following is a 562-amino-acid chain: MSHAKEDYDSSYDPYSYQADYDGHTGDPKQDLAYERQYEQQTYQVIPEVIKNFIQYFHKTVSDLIDQKVYELQASRVSSDLIDQKVYEIQDIYENSWAKLTERFFKNAPWPEAEAIAPQVGNDAVFLILYKELYYRHIYAKVTGGPTLEQRFESYYNYCNLFNYILNADGPAPLELPNQWLWDIIDEFIYQFQSFSQYRCKTAKKSEEEIEFLRSNPKIWNVHSVLNVLHSLVDKSNINRQLEVYTSGGDPESVAGEYGRHSLYKMLGYFSLVGLLRLHSLLGDYYQAIKVLENIELNKKSMYSRVPECQVTTYYYVGFAYLMMRRYQDSIRVFANILLYIQRTKSMFQRTTYKYEMINKQNEQMHALLSIALTMYPMRIDESIHTQLREKYGDKMLRMQKGDAQIYEELFNYACPKFLSPVVPNYDNVNPNYHKEPYLQQLKVFLDEVQQQAQLSTIRSFLKLYTTMPVAKLAGFLDLPEQEFRIQLLVFKHKMKNLVWTSGISALEGEFQSASEVDFYIDKDMIHIADTKVARRYGDFFIRQIHKFEELNKTLKKMSQKP.

The segment at 1 to 29 (MSHAKEDYDSSYDPYSYQADYDGHTGDPK) is disordered. A compositionally biased stretch (low complexity) spans 11–20 (SYDPYSYQAD). The region spanning 329-535 (DSIRVFANIL…IHIADTKVAR (207 aa)) is the PCI domain.

This sequence belongs to the eIF-3 subunit L family. Component of the eukaryotic translation initiation factor 3 (eIF-3) complex, which is composed of 13 subunits: eif3a, eif3b, eif3c, eif3d, eif3e, eif3f, eif3g, eif3h, eif3i, eif3j, eif3k, eif3l and eif3m.

The protein localises to the cytoplasm. Its function is as follows. Component of the eukaryotic translation initiation factor 3 (eIF-3) complex, which is involved in protein synthesis of a specialized repertoire of mRNAs and, together with other initiation factors, stimulates binding of mRNA and methionyl-tRNAi to the 40S ribosome. The eIF-3 complex specifically targets and initiates translation of a subset of mRNAs involved in cell proliferation. This chain is Eukaryotic translation initiation factor 3 subunit L (eif3l), found in Xenopus laevis (African clawed frog).